The primary structure comprises 258 residues: Homeobox protein VENTX (258 aa).

The segment covering 1–32 has biased composition (polar residues); sequence MRLSSSPPRGPQQLSSFGSVDWLSQSSCSGPT. Disordered regions lie at residues 1-93 and 227-248; these read MRLS…RAPR and SHPP…PRGL. Positions 91–150 form a DNA-binding region, homeobox; it reads APRVRTAFTMEQVRTLEGVFQHHQYLSPLERKRLAREMQLSEVQIKTWFQNRRMKHKRQM.

Expressed in bone marrow of patients recovering from chemotherapy. Also expressed in an erythroleukemia cell line.

It is found in the nucleus. Its function is as follows. May be involved in ventralization. The sequence is that of Homeobox protein VENTX (VENTX) from Homo sapiens (Human).